Here is a 408-residue protein sequence, read N- to C-terminus: Serine/threonine transporter SstT (408 aa).

9 consecutive transmembrane segments (helical) span residues 14–34 (GNLI…GIFS), 43–63 (IFGA…VFIL), 83–103 (IIFL…SISF), 143–163 (ALSS…GFAL), 181–201 (VLKI…GLVA), 219–239 (LIIL…LIVF), 247–269 (YPLI…SSAA), 290–310 (ISIP…IAIL), and 332–352 (VLAA…LLLI).

This sequence belongs to the dicarboxylate/amino acid:cation symporter (DAACS) (TC 2.A.23) family.

The protein resides in the cell inner membrane. It catalyses the reaction L-serine(in) + Na(+)(in) = L-serine(out) + Na(+)(out). The enzyme catalyses L-threonine(in) + Na(+)(in) = L-threonine(out) + Na(+)(out). Involved in the import of serine and threonine into the cell, with the concomitant import of sodium (symport system). In Campylobacter lari (strain RM2100 / D67 / ATCC BAA-1060), this protein is Serine/threonine transporter SstT.